Consider the following 56-residue polypeptide: Large ribosomal subunit protein bL32 (56 aa).

The tract at residues 1-26 is disordered; it reads MAVQQNKPTRSKRGMRRSHDSLTTAA.

Belongs to the bacterial ribosomal protein bL32 family.

This chain is Large ribosomal subunit protein bL32, found in Erwinia tasmaniensis (strain DSM 17950 / CFBP 7177 / CIP 109463 / NCPPB 4357 / Et1/99).